We begin with the raw amino-acid sequence, 567 residues long: Probable transport protein (567 aa).

A compositionally biased stretch (basic and acidic residues) spans 1 to 30 (MSDRVEVNERRSDSVSEKEPARDDARKDVT). The segment at 1–38 (MSDRVEVNERRSDSVSEKEPARDDARKDVTDDQEDAPP) is disordered. Over 1–46 (MSDRVEVNERRSDSVSEKEPARDDARKDVTDDQEDAPPFMTANNAR) the chain is Cytoplasmic. Residues 47–67 (VMLVQAIGGSLNGYSIGFVGV) traverse the membrane as a helical segment. Residues 68–160 (YSTLFGYSTN…PSGYSSSESG (93 aa)) lie on the Extracellular side of the membrane. A helical transmembrane segment spans residues 161 to 181 (IFAGSMIAGCLIGSVFAGPLA). Over 182 to 189 (SKIGARLS) the chain is Cytoplasmic. The chain crosses the membrane as a helical span at residues 190–210 (FLLVGLVGVVASVMYHASCAA). At 211-212 (DE) the chain is on the extracellular side. The chain crosses the membrane as a helical span at residues 213–233 (FWVLIVGRFVIGLFLGVICVA). The Cytoplasmic segment spans residues 234 to 249 (CPVYTDQNAHPKWKRT). Residues 250–270 (IGVMFQVFTTLGIFVAALMGL) traverse the membrane as a helical segment. Over 271–289 (ALGQSIRFDHDGDQKVMAR) the chain is Extracellular. A helical transmembrane segment spans residues 290 to 310 (MQGLCVFSTLFSLLTVVLGIV). Residues 311–341 (TRESRAKFDGGEEGRAELNPSEYGYVEMIPR) lie on the Cytoplasmic side of the membrane. A helical transmembrane segment spans residues 342–362 (LLMGCVMAGTLQLTGINAVMN). The Extracellular segment spans residues 363-366 (YAPT). Residues 367–387 (IMGSLGLAPLVGNFVVMLWNF) form a helical membrane-spanning segment. Topologically, residues 388–404 (VTTLASIPLSYVFTMRH) are cytoplasmic. The helical transmembrane segment at 405-425 (VFLFGSIFTSCMCLFMCGIPV) threads the bilayer. At 426-437 (YPGVSKKLEAKN) the chain is on the extracellular side. A helical transmembrane segment spans residues 438–458 (GVAITGILLFILGFEVCVGPC). Residues 459 to 480 (YYVLTQDMFPPSFRPRGASFTQ) are Cytoplasmic-facing. Residues 481–501 (VAQFIFNLIINVCYPIATESI) form a helical membrane-spanning segment. Topologically, residues 502–514 (SGGPSGNQDKGQA) are extracellular. Residues 515–535 (VAFIFFGGLGLICFVIQVFFL) traverse the membrane as a helical segment. Over 536–567 (HPWDEERDGKKVVAPAIGKKELSEESIGNRAE) the chain is Cytoplasmic.

Belongs to the major facilitator superfamily. Sugar transporter (TC 2.A.1.1) family.

The protein resides in the membrane. Functionally, probable membrane transport protein. The protein is Probable transport protein (PRO-1) of Leishmania enriettii.